The primary structure comprises 1010 residues: Probable LRR receptor-like serine/threonine-protein kinase At3g47570 (1010 aa).

A signal peptide spans 1-19 (MRLFLLLAFNALMLLETHG). The Extracellular segment spans residues 20–645 (FTDETDRQAL…SSRLKKVVIG (626 aa)). 2 N-linked (GlcNAc...) asparagine glycosylation sites follow: asparagine 48 and asparagine 88. LRR repeat units follow at residues 89–113 (LSFL…VGQL), 114–137 (SRLE…LYNC), 139–161 (RLLN…LGSL), 162–185 (TNLV…LGNL), 186–209 (TLLE…VAQL), 211–233 (QIWS…LYNL), 234–258 (SSLK…GILL), 259–282 (PNLL…LSNI), 283–307 (STLE…NVPN), and 310–333 (LLFL…TSLT). A glycan (N-linked (GlcNAc...) asparagine) is linked at asparagine 136. Asparagine 184 carries N-linked (GlcNAc...) asparagine glycosylation. 2 N-linked (GlcNAc...) asparagine glycosylation sites follow: asparagine 221 and asparagine 232. Residues asparagine 281 and asparagine 294 are each glycosylated (N-linked (GlcNAc...) asparagine). Residues asparagine 334 and asparagine 358 are each glycosylated (N-linked (GlcNAc...) asparagine). LRR repeat units follow at residues 335 to 359 (CTQL…IANL), 361 to 384 (AKLV…IGNL), 385 to 408 (INLQ…LGKL), 410 to 432 (NLRY…IGNM), 433 to 455 (TMLE…SLGN), 457 to 480 (SHLL…IMKI), 481 to 504 (QQLL…IGAL), 505 to 528 (QNLG…LGNC), 530 to 551 (TMES…LKGL), 552 to 574 (VGVK…YFAS), and 575 to 600 (FSKL…IFEN). 3 N-linked (GlcNAc...) asparagine glycosylation sites follow: asparagine 431, asparagine 455, and asparagine 470. N-linked (GlcNAc...) asparagine glycosylation is found at asparagine 582 and asparagine 600. Residues 646–666 (VSVGITLLLLLFMASVTLIWL) form a helical membrane-spanning segment. The Cytoplasmic portion of the chain corresponds to 667 to 1010 (RKRKKNKETN…FFKASRTTWR (344 aa)). Threonine 699 carries the phosphothreonine modification. A Protein kinase domain is found at 702–1002 (FSSSNMVGSG…ELISIRERFF (301 aa)). ATP-binding positions include 708–716 (VGSGSFGTV) and lysine 731. Phosphotyrosine is present on residues tyrosine 781 and tyrosine 826. The active-site Proton acceptor is the aspartate 839. Phosphotyrosine is present on tyrosine 887.

It belongs to the protein kinase superfamily. Ser/Thr protein kinase family.

It localises to the cell membrane. It catalyses the reaction L-seryl-[protein] + ATP = O-phospho-L-seryl-[protein] + ADP + H(+). The enzyme catalyses L-threonyl-[protein] + ATP = O-phospho-L-threonyl-[protein] + ADP + H(+). In Arabidopsis thaliana (Mouse-ear cress), this protein is Probable LRR receptor-like serine/threonine-protein kinase At3g47570.